The chain runs to 541 residues: Reticulophagy regulator 2 (541 aa).

3 helical membrane passes run Leu-75–Leu-91, Phe-99–Trp-115, and Val-199–Val-219. Residues Leu-249 to Leu-282 form a disordered region. Positions His-250–Gly-260 are enriched in basic residues. The span at Pro-270 to Ala-280 shows a compositional bias: acidic residues. Thr-274 is modified (phosphothreonine). Residues Ser-276, Ser-278, Ser-286, and Ser-306 each carry the phosphoserine modification. Phosphothreonine is present on Thr-329. 3 disordered regions span residues Val-331–Glu-389, Thr-403–Ser-440, and Pro-459–Ala-481. Phosphoserine is present on residues Ser-332, Ser-339, and Ser-342. Over residues Pro-459–Ala-475 the composition is skewed to low complexity. Positions Glu-485–Leu-490 match the LIR motif motif. Positions Glu-496–Pro-541 are disordered. The segment covering Glu-507–Gly-522 has biased composition (pro residues).

This sequence belongs to the RETREG family. Interacts with ATG8 family modifier proteins MAP1LC3A, MAP1LC3B, GABARAP, GABARAPL1 and GABARAPL2. Interacts with CANX.

Its subcellular location is the endoplasmic reticulum membrane. Endoplasmic reticulum (ER)-anchored autophagy regulator which exists in an inactive state under basal conditions but is activated following cellular stress. When activated, induces ER fragmentation and mediates ER delivery into lysosomes through sequestration into autophagosomes via interaction with ATG8 family proteins. Required for collagen quality control in a LIR motif-independent manner. The protein is Reticulophagy regulator 2 (Retreg2) of Rattus norvegicus (Rat).